Here is a 321-residue protein sequence, read N- to C-terminus: Probable nucleosome assembly protein (321 aa).

Over residues 272–298 (EENDYDFGEDFEDEEGEDDDEEDDEEE) the composition is skewed to acidic residues. The disordered stretch occupies residues 272–321 (EENDYDFGEDFEDEEGEDDDEEDDEEEQTIKKPSGKGKAQPQQPQDCKQQ). Residues 311–321 (QPQQPQDCKQQ) show a composition bias toward low complexity.

It belongs to the nucleosome assembly protein (NAP) family.

The protein resides in the nucleus. May modulate chromatin structure by regulation of histone octamer formation. In Dictyostelium discoideum (Social amoeba), this protein is Probable nucleosome assembly protein (nap1).